Reading from the N-terminus, the 149-residue chain is UPF0260 protein Psyr_1567 (149 aa).

It belongs to the UPF0260 family.

The chain is UPF0260 protein Psyr_1567 from Pseudomonas syringae pv. syringae (strain B728a).